The following is a 427-amino-acid chain: NADPH-dependent stearoyl-CoA 9-desaturase (427 aa).

His-90, His-94, His-125, His-129, His-130, His-304, His-308, and His-309 together coordinate Fe cation.

It belongs to the fatty acid desaturase type 1 family. In terms of assembly, interacts with the electron transfer protein Rv3230c to form a functional acyl-CoA desaturase complex. Fe(2+) serves as cofactor. In terms of processing, is rapidly degraded by a mycobacterial protein degradation system that specifically targets the residues LAA at the C-terminus, leading to a post-translational proteolytic regulation of DesA3 essential activity.

It is found in the cell membrane. The catalysed reaction is octadecanoyl-CoA + NADPH + O2 + H(+) = (9Z)-octadecenoyl-CoA + NADP(+) + 2 H2O. Its pathway is lipid metabolism; fatty acid metabolism. Its function is as follows. Is likely involved in the aerobic desaturation system responsible for the synthesis of oleic acid from stearoyl-CoA; oleic acid is a precursor of mycobacterial membrane phospholipids and triglycerides. Catalyzes the conversion of stearoyl-CoA to oleoyl-CoA by introduction of a cis double bond between carbons 9 and 10 of the acyl chain. Requires the electron transfer partner Rv3230c to pass two electrons from NADPH to its active site diiron center. Is also able to catalyze the 9-desaturation of palmitoyl-CoA to palmitoleoyl-CoA. This chain is NADPH-dependent stearoyl-CoA 9-desaturase (desA3), found in Mycobacterium tuberculosis (strain CDC 1551 / Oshkosh).